A 142-amino-acid polypeptide reads, in one-letter code: Hemoglobin subunit alpha-2 (142 aa).

The Globin domain maps to 2 to 142 (VLSPADKTNV…VSTVLTSKYR (141 aa)). His-59 provides a ligand contact to O2. His-88 is a binding site for heme b.

The protein belongs to the globin family. In terms of assembly, heterotetramer of two alpha chains and two beta chains. As to expression, red blood cells.

Its function is as follows. Involved in oxygen transport from the lung to the various peripheral tissues. In terms of biological role, hemopressin acts as an antagonist peptide of the cannabinoid receptor CNR1. Hemopressin-binding efficiently blocks cannabinoid receptor CNR1 and subsequent signaling. In Hylobates lar (Lar gibbon), this protein is Hemoglobin subunit alpha-2 (HBA2).